A 23-amino-acid chain; its full sequence is Thymidine phosphorylase (23 aa).

It belongs to the thymidine/pyrimidine-nucleoside phosphorylase family. In terms of assembly, homodimer.

The catalysed reaction is thymidine + phosphate = 2-deoxy-alpha-D-ribose 1-phosphate + thymine. The enzymes which catalyze the reversible phosphorolysis of pyrimidine nucleosides are involved in the degradation of these compounds and in their utilization as carbon and energy sources, or in the rescue of pyrimidine bases for nucleotide synthesis. The sequence is that of Thymidine phosphorylase (deoA) from Lacticaseibacillus rhamnosus (Lactobacillus rhamnosus).